The sequence spans 186 residues: Ribosome-recycling factor (186 aa).

It belongs to the RRF family.

The protein localises to the cytoplasm. Functionally, responsible for the release of ribosomes from messenger RNA at the termination of protein biosynthesis. May increase the efficiency of translation by recycling ribosomes from one round of translation to another. The chain is Ribosome-recycling factor from Maricaulis maris (strain MCS10) (Caulobacter maris).